We begin with the raw amino-acid sequence, 321 residues long: Lipoyl synthase (321 aa).

Positions 68, 73, 79, 94, 98, 101, and 308 each coordinate [4Fe-4S] cluster. The 218-residue stretch at 80 to 297 (FNHGTATFMI…KAEAMAMGFT (218 aa)) folds into the Radical SAM core domain.

This sequence belongs to the radical SAM superfamily. Lipoyl synthase family. The cofactor is [4Fe-4S] cluster.

Its subcellular location is the cytoplasm. It catalyses the reaction [[Fe-S] cluster scaffold protein carrying a second [4Fe-4S](2+) cluster] + N(6)-octanoyl-L-lysyl-[protein] + 2 oxidized [2Fe-2S]-[ferredoxin] + 2 S-adenosyl-L-methionine + 4 H(+) = [[Fe-S] cluster scaffold protein] + N(6)-[(R)-dihydrolipoyl]-L-lysyl-[protein] + 4 Fe(3+) + 2 hydrogen sulfide + 2 5'-deoxyadenosine + 2 L-methionine + 2 reduced [2Fe-2S]-[ferredoxin]. The protein operates within protein modification; protein lipoylation via endogenous pathway; protein N(6)-(lipoyl)lysine from octanoyl-[acyl-carrier-protein]: step 2/2. In terms of biological role, catalyzes the radical-mediated insertion of two sulfur atoms into the C-6 and C-8 positions of the octanoyl moiety bound to the lipoyl domains of lipoate-dependent enzymes, thereby converting the octanoylated domains into lipoylated derivatives. This chain is Lipoyl synthase, found in Cronobacter sakazakii (strain ATCC BAA-894) (Enterobacter sakazakii).